A 263-amino-acid chain; its full sequence is 3-methyl-2-oxobutanoate hydroxymethyltransferase (263 aa).

The Mg(2+) site is built by aspartate 45 and aspartate 84. Residues 45 to 46 (DS), aspartate 84, and lysine 112 each bind 3-methyl-2-oxobutanoate. Glutamate 114 contributes to the Mg(2+) binding site. Glutamate 180 (proton acceptor) is an active-site residue.

Belongs to the PanB family. Homodecamer; pentamer of dimers. Mg(2+) serves as cofactor.

It localises to the cytoplasm. It catalyses the reaction 3-methyl-2-oxobutanoate + (6R)-5,10-methylene-5,6,7,8-tetrahydrofolate + H2O = 2-dehydropantoate + (6S)-5,6,7,8-tetrahydrofolate. It participates in cofactor biosynthesis; (R)-pantothenate biosynthesis; (R)-pantoate from 3-methyl-2-oxobutanoate: step 1/2. Catalyzes the reversible reaction in which hydroxymethyl group from 5,10-methylenetetrahydrofolate is transferred onto alpha-ketoisovalerate to form ketopantoate. The polypeptide is 3-methyl-2-oxobutanoate hydroxymethyltransferase (Salmonella paratyphi C (strain RKS4594)).